The following is a 198-amino-acid chain: KinB-signaling pathway activation protein (198 aa).

The next 6 membrane-spanning stretches (helical) occupy residues 9 to 29 (FFFS…FALK), 42 to 62 (AGQI…FSVI), 90 to 110 (LQLF…FLFF), 117 to 137 (LAGY…TAYI), 146 to 166 (TFVS…FPAL), and 173 to 193 (WLYL…LMLP).

Its subcellular location is the cell membrane. Its function is as follows. Involved in the activation of the KinB signaling pathway of sporulation. The sequence is that of KinB-signaling pathway activation protein (kbaA) from Bacillus subtilis (strain 168).